The sequence spans 368 residues: Probable endopolygalacturonase A (368 aa).

A signal peptide spans 1–18 (MRSVKLFGLAALGSLGAA). Positions 19 to 31 (APAPSRVSDLTKR) are excised as a propeptide. Cys35 and Cys50 are disulfide-bonded. PbH1 repeat units follow at residues 140 to 162 (LEDS…SVQA), 167 to 192 (LIDI…DISE), 193 to 214 (STGV…AINS), 215 to 235 (GENI…SIGS), 244 to 265 (VKNV…RIKT), 273 to 295 (VSQV…VIEQ), and 307 to 352 (TTGV…DITG). Asp207 serves as the catalytic Proton donor. A disulfide bridge links Cys209 with Cys225. His229 is a catalytic residue. An N-linked (GlcNAc...) asparagine glycan is attached at Asn246. Disulfide bonds link Cys335/Cys340 and Cys359/Cys368.

Belongs to the glycosyl hydrolase 28 family.

It is found in the secreted. It catalyses the reaction (1,4-alpha-D-galacturonosyl)n+m + H2O = (1,4-alpha-D-galacturonosyl)n + (1,4-alpha-D-galacturonosyl)m.. Functionally, involved in maceration and soft-rotting of plant tissue. Hydrolyzes the 1,4-alpha glycosidic bonds of de-esterified pectate in the smooth region of the plant cell wall. The protein is Probable endopolygalacturonase A (pgaA) of Aspergillus fumigatus (strain CBS 144.89 / FGSC A1163 / CEA10) (Neosartorya fumigata).